The following is a 159-amino-acid chain: Transcription elongation factor GreA (159 aa).

A coiled-coil region spans residues 47–73; the sequence is AEYDAAREEQSLTEAHIADLENKLSTA.

It belongs to the GreA/GreB family.

Its function is as follows. Necessary for efficient RNA polymerase transcription elongation past template-encoded arresting sites. The arresting sites in DNA have the property of trapping a certain fraction of elongating RNA polymerases that pass through, resulting in locked ternary complexes. Cleavage of the nascent transcript by cleavage factors such as GreA or GreB allows the resumption of elongation from the new 3'terminus. GreA releases sequences of 2 to 3 nucleotides. In Chlorobium phaeobacteroides (strain DSM 266 / SMG 266 / 2430), this protein is Transcription elongation factor GreA.